A 474-amino-acid chain; its full sequence is Tubulin gamma-1 chain (474 aa).

142-148 (AGGTGSG) contributes to the GTP binding site.

The protein belongs to the tubulin family. As to quaternary structure, gamma-tubulin complex is composed of gamma-tubulin and GCP proteins.

The protein resides in the cytoplasm. It localises to the cytoskeleton. The protein localises to the microtubule organizing center. Its subcellular location is the nucleus. It is found in the cell cortex. In terms of biological role, tubulin is the major constituent of microtubules. The gamma chain is found at microtubule organizing centers (MTOC) such as the spindle poles, suggesting that it is involved in the minus-end nucleation of microtubule assembly. Its function is as follows. Gamma-tubulin complex is essential for the control of microtubular network remodeling in the course of initiation and development of giant-feeding cells, and for the successful reproduction of nematodes (e.g. Meloidogyne spp.) in their plant hosts. The protein is Tubulin gamma-1 chain (TUBG1) of Arabidopsis thaliana (Mouse-ear cress).